A 209-amino-acid chain; its full sequence is Glutathione S-transferase 1, isoform D (209 aa).

The GST N-terminal domain maps to 1–80; sequence MDFYYLPGSA…YLAEKYGKDD (80 aa). Residues Ser-9, 50–52, and 64–66 each bind glutathione; these read HCI and ESR. Residues 86-207 enclose the GST C-terminal domain; that stretch reads DPQKRAVVNQ…AGADEFKAKF (122 aa).

This sequence belongs to the GST superfamily. Theta family. In terms of assembly, homodimer.

The catalysed reaction is RX + glutathione = an S-substituted glutathione + a halide anion + H(+). The enzyme catalyses 1,1,1-trichloro-2,2-bis(4-chlorophenyl)ethane = 1,1-dichloro-2,2-bis(4-chlorophenyl)ethylene + chloride + H(+). Inhibited by S-hexylglutathione. Its function is as follows. Conjugation of reduced glutathione to a wide number of exogenous and endogenous hydrophobic electrophiles. Has DDT dehydrochlorinase activity. The protein is Glutathione S-transferase 1, isoform D (GstD1) of Anopheles gambiae (African malaria mosquito).